Consider the following 115-residue polypeptide: Immunoglobulin kappa chain variable 12-41 (115 aa).

The signal sequence occupies residues 1 to 20; the sequence is MSVLTQVLALLLLWLTGARC. The segment at 21–43 is framework-1; it reads DIQMTQSPASLSASVGETVTITC. C43 and C108 are disulfide-bonded. A complementarity-determining-1 region spans residues 44–54; that stretch reads RASGNIHNYLA. Residues 55 to 69 form a framework-2 region; it reads WYQQKQGKSPQLLVY. Residues 70-76 are complementarity-determining-2; sequence NAKTLAD. A framework-3 region spans residues 77–108; the sequence is GVPSRFSGSGSGTQYSLKINSLQPEDFGSYYC. The segment at 109-115 is complementarity-determining-3; it reads QHFWSTP.

This is Immunoglobulin kappa chain variable 12-41 from Mus musculus (Mouse).